A 993-amino-acid polypeptide reads, in one-letter code: Synaptonemal complex protein 1 (993 aa).

A Mediates head to head self-assembly of N-terminal ends motif is present at residues 98 to 108; the sequence is PMSRLYSKLYK. The Nuclear localization signal signature appears at 114–117; sequence KKWK. Coiled-coil stretches lie at residues 117–172 and 215–688; these read KVSI…LIKE and IEKM…EIEN. Residues 203–359 form an interaction with SYCE3 region; the sequence is ETRQVYVDLN…SQLTEVKEAQ (157 aa). The required for pH-induced assembly of C-terminal ends into antiparallel tetramers stretch occupies residues 694–788; that stretch reads GKLLGEVEKA…VSLKKQLEIE (95 aa). The short motif at 697 to 700 is the Nuclear localization signal element; it reads LGEV. A coiled-coil region spans residues 764 to 808; it reads KIALETELSNIRNELVSLKKQLEIEKEEKEKLKMAKENTAILKDK. Residues 801 to 993 form a DNA-binding region; the sequence is NTAILKDKKD…RLKEAEKLFS (193 aa). The residue at position 820 (serine 820) is a Phosphoserine. The segment at 824–861 is disordered; it reads TSWKFDSKTTPSQNISRLSSSMDSGKSKDNRDNLRASA. Positions 831–847 are enriched in polar residues; that stretch reads KTTPSQNISRLSSSMDS. The segment covering 848–857 has biased composition (basic and acidic residues); the sequence is GKSKDNRDNL. The Nuclear localization signal motif lies at 898–901; that stretch reads KKRK.

Structural component of synaptonemal complexes. Homotetramer that consists of an N-terminal four-helical bundle that bifurcates into two elongated C-terminal dimeric coiled coils. This tetrameric building block potentially self-assembles into a supramolecular zipper-like lattice to mediate meiotic chromosome synapsis. Self-assembly is likely initiated by local proton density at chromosome axis, which is predicted to trigger antiparallel back to back assembly of adjacent C-terminal ends into tetrameric structures that anchor to chromosomal DNA. Then the N-terminal ends are predicted to undergo cooperative antiparallel head to head assembly at the midline of synaptonemal complexes central element to form a zipper-like lattice between properly aligned homologous chromosomes. The nascent synapsis generated by SYCP1 is stabilized through interaction with central element proteins SYCE1 and SYCE2. Interacts (via tetrameric core) with SYCE3; the interaction remodels SYCP1 homotetramers to 2:1 heterotrimers with SYCE3. SYCP1/SYCE3 heterotrimers form lattice assemblies as part of the mature synaptonemal complex via both lateral and head-to-head interactions. Forms a complex with EWSR1, PRDM9, SYCP3 and REC8; complex formation is dependent of phosphorylated form of REC8 and requires PRDM9 bound to hotspot DNA; EWSR1 joins PRDM9 with the chromosomal axis through REC8. Interacts with SPO16. In terms of tissue distribution, detected in testis. Detected in spermatocytes (at protein level).

Its subcellular location is the nucleus. The protein resides in the chromosome. It localises to the centromere. Its function is as follows. Major component of the transverse filaments of synaptonemal complexes, formed between homologous chromosomes during meiotic prophase. Required for normal assembly of the central element of the synaptonemal complexes. Required for normal centromere pairing during meiosis. Required for normal meiotic chromosome synapsis during oocyte and spermatocyte development and for normal male and female fertility. The sequence is that of Synaptonemal complex protein 1 from Mus musculus (Mouse).